Here is a 437-residue protein sequence, read N- to C-terminus: Adenosylhomocysteinase (437 aa).

Substrate is bound by residues T54, D125, and E170. Residue 171 to 173 (TTT) participates in NAD(+) binding. Substrate contacts are provided by K200 and D204. Residues N205, 234-239 (GYGWVG), E258, N293, 314-316 (AGH), and N361 contribute to the NAD(+) site.

It belongs to the adenosylhomocysteinase family. The cofactor is NAD(+).

Its subcellular location is the cytoplasm. The catalysed reaction is S-adenosyl-L-homocysteine + H2O = L-homocysteine + adenosine. Its pathway is amino-acid biosynthesis; L-homocysteine biosynthesis; L-homocysteine from S-adenosyl-L-homocysteine: step 1/1. In terms of biological role, may play a key role in the regulation of the intracellular concentration of adenosylhomocysteine. The protein is Adenosylhomocysteinase of Pyrobaculum aerophilum (strain ATCC 51768 / DSM 7523 / JCM 9630 / CIP 104966 / NBRC 100827 / IM2).